The sequence spans 426 residues: 3-phosphoshikimate 1-carboxyvinyltransferase (426 aa).

Positions 21, 22, and 26 each coordinate 3-phosphoshikimate. Lys-21 is a phosphoenolpyruvate binding site. Phosphoenolpyruvate-binding residues include Gly-91 and Arg-119. 6 residues coordinate 3-phosphoshikimate: Ser-162, Ser-163, Gln-164, Ser-190, Asp-304, and Lys-331. Residue Gln-164 participates in phosphoenolpyruvate binding. Asp-304 (proton acceptor) is an active-site residue. Positions 335, 377, and 403 each coordinate phosphoenolpyruvate.

Belongs to the EPSP synthase family. In terms of assembly, monomer.

The protein resides in the cytoplasm. The enzyme catalyses 3-phosphoshikimate + phosphoenolpyruvate = 5-O-(1-carboxyvinyl)-3-phosphoshikimate + phosphate. It functions in the pathway metabolic intermediate biosynthesis; chorismate biosynthesis; chorismate from D-erythrose 4-phosphate and phosphoenolpyruvate: step 6/7. Catalyzes the transfer of the enolpyruvyl moiety of phosphoenolpyruvate (PEP) to the 5-hydroxyl of shikimate-3-phosphate (S3P) to produce enolpyruvyl shikimate-3-phosphate and inorganic phosphate. This chain is 3-phosphoshikimate 1-carboxyvinyltransferase, found in Clostridium kluyveri (strain ATCC 8527 / DSM 555 / NBRC 12016 / NCIMB 10680 / K1).